Reading from the N-terminus, the 351-residue chain is Nicotinate-nucleotide--dimethylbenzimidazole phosphoribosyltransferase (351 aa).

Glu-317 acts as the Proton acceptor in catalysis.

The protein belongs to the CobT family.

It catalyses the reaction 5,6-dimethylbenzimidazole + nicotinate beta-D-ribonucleotide = alpha-ribazole 5'-phosphate + nicotinate + H(+). It participates in nucleoside biosynthesis; alpha-ribazole biosynthesis; alpha-ribazole from 5,6-dimethylbenzimidazole: step 1/2. Catalyzes the synthesis of alpha-ribazole-5'-phosphate from nicotinate mononucleotide (NAMN) and 5,6-dimethylbenzimidazole (DMB). The chain is Nicotinate-nucleotide--dimethylbenzimidazole phosphoribosyltransferase from Pseudomonas aeruginosa (strain ATCC 15692 / DSM 22644 / CIP 104116 / JCM 14847 / LMG 12228 / 1C / PRS 101 / PAO1).